A 525-amino-acid polypeptide reads, in one-letter code: CBL-interacting protein kinase 21 (525 aa).

Residues 87 to 342 (YEMGRALGEG…ITGIRAHEWF (256 aa)) enclose the Protein kinase domain. ATP-binding positions include 93–101 (LGEGHFGKV) and Lys-116. The active-site Proton acceptor is the Asp-210. The interval 228 to 257 (DFGLSALPQNQRKDGLLHTTCGSPNYIAPE) is activation loop. The region spanning 372 to 401 (DIETSPAISQINAFQLIGMSSCLDLSGFFE) is the NAF domain. Residues 407 to 436 (ERKIRFVSNYSPTSLFEKIESTVTEKGFQV) form a PPI region.

It belongs to the protein kinase superfamily. CAMK Ser/Thr protein kinase family. SNF1 subfamily. The cofactor is Mn(2+).

The enzyme catalyses L-seryl-[protein] + ATP = O-phospho-L-seryl-[protein] + ADP + H(+). It carries out the reaction L-threonyl-[protein] + ATP = O-phospho-L-threonyl-[protein] + ADP + H(+). Functionally, CIPK serine-threonine protein kinases interact with CBL proteins. Binding of a CBL protein to the regulatory NAF domain of CIPK protein lead to the activation of the kinase in a calcium-dependent manner. In Oryza sativa subsp. japonica (Rice), this protein is CBL-interacting protein kinase 21 (CIPK21).